The chain runs to 413 residues: Serine--tRNA ligase (413 aa).

221–223 (TAE) contributes to the L-serine binding site. ATP is bound at residue 252–254 (RRE). L-serine is bound at residue E275. 339 to 342 (EVSS) lines the ATP pocket. S375 is a binding site for L-serine.

Belongs to the class-II aminoacyl-tRNA synthetase family. Type-1 seryl-tRNA synthetase subfamily. Homodimer. The tRNA molecule binds across the dimer.

The protein localises to the cytoplasm. It catalyses the reaction tRNA(Ser) + L-serine + ATP = L-seryl-tRNA(Ser) + AMP + diphosphate + H(+). The enzyme catalyses tRNA(Sec) + L-serine + ATP = L-seryl-tRNA(Sec) + AMP + diphosphate + H(+). The protein operates within aminoacyl-tRNA biosynthesis; selenocysteinyl-tRNA(Sec) biosynthesis; L-seryl-tRNA(Sec) from L-serine and tRNA(Sec): step 1/1. Catalyzes the attachment of serine to tRNA(Ser). Is also able to aminoacylate tRNA(Sec) with serine, to form the misacylated tRNA L-seryl-tRNA(Sec), which will be further converted into selenocysteinyl-tRNA(Sec). This chain is Serine--tRNA ligase, found in Dehalococcoides mccartyi (strain ATCC BAA-2266 / KCTC 15142 / 195) (Dehalococcoides ethenogenes (strain 195)).